The following is a 232-amino-acid chain: Glycerol-3-phosphate acyltransferase (232 aa).

The next 6 membrane-spanning stretches (helical) occupy residues 4-24 (FLAI…IIAG), 56-76 (VVTL…VGFF), 90-110 (IALS…TVFA), 124-144 (MLIG…LLAV), 152-172 (VGSI…KYVF), and 191-211 (SLDY…IYTH).

Belongs to the PlsY family. In terms of assembly, probably interacts with PlsX.

The protein localises to the cell inner membrane. The catalysed reaction is an acyl phosphate + sn-glycerol 3-phosphate = a 1-acyl-sn-glycero-3-phosphate + phosphate. It functions in the pathway lipid metabolism; phospholipid metabolism. Catalyzes the transfer of an acyl group from acyl-phosphate (acyl-PO(4)) to glycerol-3-phosphate (G3P) to form lysophosphatidic acid (LPA). This enzyme utilizes acyl-phosphate as fatty acyl donor, but not acyl-CoA or acyl-ACP. The protein is Glycerol-3-phosphate acyltransferase of Chlorobaculum tepidum (strain ATCC 49652 / DSM 12025 / NBRC 103806 / TLS) (Chlorobium tepidum).